A 134-amino-acid polypeptide reads, in one-letter code: Small ribosomal subunit protein uS8 (134 aa).

It belongs to the universal ribosomal protein uS8 family. Part of the 30S ribosomal subunit. Contacts proteins S5 and S12.

One of the primary rRNA binding proteins, it binds directly to 16S rRNA central domain where it helps coordinate assembly of the platform of the 30S subunit. The polypeptide is Small ribosomal subunit protein uS8 (Thermosipho melanesiensis (strain DSM 12029 / CIP 104789 / BI429)).